The primary structure comprises 66 residues: uncharacterized protein (66 aa).

An N-terminal signal peptide occupies residues 1-25 (MIVIILLFISIIVFLSVIQPQPSKN). A compositionally biased stretch (polar residues) spans 21–31 (QPSKNKSRQQA). The tract at residues 21–66 (QPSKNKSRQQADSGYFGYSDHSSHHDGCSSDGGFSDSGCGGGGGGD) is disordered.

This is an uncharacterized protein from Bacillus subtilis (strain 168).